Consider the following 345-residue polypeptide: Dihydroorotase (345 aa).

Residues His13 and His15 each contribute to the Zn(2+) site. Substrate contacts are provided by residues 15-17 (HLR) and Asn41. Lys99, His136, His174, and Asp247 together coordinate Zn(2+). Residue Lys99 is modified to N6-carboxylysine. His136 is a substrate binding site. The active site involves Asp247. Substrate contacts are provided by His251 and Ala263.

Belongs to the metallo-dependent hydrolases superfamily. DHOase family. Class II DHOase subfamily. Homodimer. Zn(2+) is required as a cofactor.

The enzyme catalyses (S)-dihydroorotate + H2O = N-carbamoyl-L-aspartate + H(+). Its pathway is pyrimidine metabolism; UMP biosynthesis via de novo pathway; (S)-dihydroorotate from bicarbonate: step 3/3. Functionally, catalyzes the reversible cyclization of carbamoyl aspartate to dihydroorotate. This chain is Dihydroorotase, found in Halorhodospira halophila (strain DSM 244 / SL1) (Ectothiorhodospira halophila (strain DSM 244 / SL1)).